The primary structure comprises 336 residues: Holliday junction branch migration complex subunit RuvB (336 aa).

Residues 4 to 184 (SDRLISSQSI…FGIVQRLEYY (181 aa)) are large ATPase domain (RuvB-L). Residues Ile-23, Arg-24, Gly-65, Lys-68, Thr-69, Thr-70, 131 to 133 (EDY), Arg-174, Tyr-184, and Arg-221 each bind ATP. Thr-69 lines the Mg(2+) pocket. The segment at 185–255 (SVDSLTQIVA…MAQQALEMLE (71 aa)) is small ATPAse domain (RuvB-S). The segment at 258-336 (QHGFDLMDRK…HFGFSAIEQE (79 aa)) is head domain (RuvB-H). Residues Arg-313 and Arg-318 each coordinate DNA.

Belongs to the RuvB family. In terms of assembly, homohexamer. Forms an RuvA(8)-RuvB(12)-Holliday junction (HJ) complex. HJ DNA is sandwiched between 2 RuvA tetramers; dsDNA enters through RuvA and exits via RuvB. An RuvB hexamer assembles on each DNA strand where it exits the tetramer. Each RuvB hexamer is contacted by two RuvA subunits (via domain III) on 2 adjacent RuvB subunits; this complex drives branch migration. In the full resolvosome a probable DNA-RuvA(4)-RuvB(12)-RuvC(2) complex forms which resolves the HJ.

The protein localises to the cytoplasm. It catalyses the reaction ATP + H2O = ADP + phosphate + H(+). Functionally, the RuvA-RuvB-RuvC complex processes Holliday junction (HJ) DNA during genetic recombination and DNA repair, while the RuvA-RuvB complex plays an important role in the rescue of blocked DNA replication forks via replication fork reversal (RFR). RuvA specifically binds to HJ cruciform DNA, conferring on it an open structure. The RuvB hexamer acts as an ATP-dependent pump, pulling dsDNA into and through the RuvAB complex. RuvB forms 2 homohexamers on either side of HJ DNA bound by 1 or 2 RuvA tetramers; 4 subunits per hexamer contact DNA at a time. Coordinated motions by a converter formed by DNA-disengaged RuvB subunits stimulates ATP hydrolysis and nucleotide exchange. Immobilization of the converter enables RuvB to convert the ATP-contained energy into a lever motion, pulling 2 nucleotides of DNA out of the RuvA tetramer per ATP hydrolyzed, thus driving DNA branch migration. The RuvB motors rotate together with the DNA substrate, which together with the progressing nucleotide cycle form the mechanistic basis for DNA recombination by continuous HJ branch migration. Branch migration allows RuvC to scan DNA until it finds its consensus sequence, where it cleaves and resolves cruciform DNA. This is Holliday junction branch migration complex subunit RuvB from Legionella pneumophila subsp. pneumophila (strain Philadelphia 1 / ATCC 33152 / DSM 7513).